Consider the following 151-residue polypeptide: Large ribosomal subunit protein bL9 (151 aa).

The protein belongs to the bacterial ribosomal protein bL9 family.

Binds to the 23S rRNA. This is Large ribosomal subunit protein bL9 from Kosmotoga olearia (strain ATCC BAA-1733 / DSM 21960 / TBF 19.5.1).